Reading from the N-terminus, the 522-residue chain is F-box only protein 7 (522 aa).

2 disordered regions span residues 1–20 (MKLRVRLQKRTQPLEVPESE) and 85–128 (PNLP…HGQV). The ubiquitin-like stretch occupies residues 1-88 (MKLRVRLQKR…EDEMPAPNLP (88 aa)). Over residues 87–114 (LPSSTDSEHSSLQNNDQPPLAATSSQAN) the composition is skewed to polar residues. The tract at residues 92–129 (DSEHSSLQNNDQPPLAATSSQANIPDEQGSDSSHGQVT) is important for interaction with PINK1. The interval 129–169 (TQYDAWTDDSMEGPSHSAEAVSIQDAMSVEEASGFHPLEPM) is important for interaction with CDK6. The tract at residues 180-324 (PHSLEALYQS…PLLAFTRQVL (145 aa)) is important for dimerization and interaction with PSMF1. Residues 329-375 (VFGLVVLPLELKLRIFRLLDVHSVLALSAVCHDLLIASNDPLLWRCL) enclose the F-box domain. Residues 381 to 522 (RDSTIRGPDT…RSADNRLPYL (142 aa)) form an important for interaction with CDK6 region. Omega-N-methylarginine is present on residues arginine 431 and arginine 451. Residues 459-522 (DPVTSLIPRP…RSADNRLPYL (64 aa)) form a disordered region. The RFDP motif signature appears at 481-484 (RFDP). Arginine 518 is modified (asymmetric dimethylarginine).

Part of the SCF (SKP1-CUL1-F-box) E3 ubiquitin-protein ligase complex SCF(FBXO7) formed of CUL1, SKP1, RBX1 and FBXO7. Interacts via its C-terminal proline-rich region with DLGAP5. Interacts with BIRC2. Interacts with CDK6 and promotes its interaction with D-type cyclin. Interacts (via the N-terminal Ubl domain) with PRKN. Interacts (via N-terminal region) with PINK1. Interacts with PSMF1.

The protein localises to the cytoplasm. The protein resides in the nucleus. It is found in the mitochondrion. It localises to the cytosol. Its pathway is protein modification; protein ubiquitination. Functionally, substrate recognition component of a SCF (SKP1-CUL1-F-box protein) E3 ubiquitin-protein ligase complex which mediates the ubiquitination and subsequent proteasomal degradation of target proteins and plays a role in several biological processes such as cell cycle, cell proliferation, or maintenance of chromosome stability. Recognizes and ubiquitinates BIRC2 and the cell cycle regulator DLGAP5. Plays a role downstream of PINK1 in the clearance of damaged mitochondria via selective autophagy (mitophagy) by targeting PRKN to dysfunctional depolarized mitochondria. Promotes MFN1 ubiquitination. Mediates the ubiquitination and proteasomal degradation of UXT isoform 2, thereby impairing the NF-kappa-B signaling pathway. Inhibits NF-kappa-B pathway also by promoting the ubiquitinatioin of TRAF2. Affects the assembly state and activity of the proteasome in the cells including neurons by ubiquitinating the proteasomal subunit PSMA2 via 'Lys-63'-linked polyubiquitin chains. Promotes 'Lys-48'-linked polyubiquitination SIRT7, leading to the hydrogen peroxide-induced cell death. In Rattus norvegicus (Rat), this protein is F-box only protein 7 (Fbxo7).